Reading from the N-terminus, the 389-residue chain is Succinate--CoA ligase [ADP-forming] subunit beta (389 aa).

The 228-residue stretch at 9–236 (RDMFEAHGVP…KDSADPLEAK (228 aa)) folds into the ATP-grasp domain. Residues lysine 45, 52–54 (GRG), alanine 94, and glutamate 99 contribute to the ATP site. 2 residues coordinate Mg(2+): asparagine 191 and aspartate 205. Substrate is bound by residues asparagine 256 and 318-320 (GIT).

This sequence belongs to the succinate/malate CoA ligase beta subunit family. In terms of assembly, heterotetramer of two alpha and two beta subunits. The cofactor is Mg(2+).

It catalyses the reaction succinate + ATP + CoA = succinyl-CoA + ADP + phosphate. It carries out the reaction GTP + succinate + CoA = succinyl-CoA + GDP + phosphate. The protein operates within carbohydrate metabolism; tricarboxylic acid cycle; succinate from succinyl-CoA (ligase route): step 1/1. Its function is as follows. Succinyl-CoA synthetase functions in the citric acid cycle (TCA), coupling the hydrolysis of succinyl-CoA to the synthesis of either ATP or GTP and thus represents the only step of substrate-level phosphorylation in the TCA. The beta subunit provides nucleotide specificity of the enzyme and binds the substrate succinate, while the binding sites for coenzyme A and phosphate are found in the alpha subunit. In Renibacterium salmoninarum (strain ATCC 33209 / DSM 20767 / JCM 11484 / NBRC 15589 / NCIMB 2235), this protein is Succinate--CoA ligase [ADP-forming] subunit beta.